The primary structure comprises 101 residues: Interleukin-8 (101 aa).

A signal peptide spans 1-22 (MTSKLAIALLAAFLLSAALCKA). Citrulline is present on R27. Disulfide bonds link C34–C61 and C36–C77.

It belongs to the intercrine alpha (chemokine CxC) family. As to quaternary structure, homodimer. Citrullination at Arg-27 prevents proteolysis, and dampens tissue inflammation, it also enhances leukocytosis, possibly through impaired chemokine clearance from the blood circulation.

Its subcellular location is the secreted. In terms of biological role, chemotactic factor that mediates inflammatory response by attracting neutrophils, basophils, and T-cells to clear pathogens and protect the host from infection. Also plays an important role in neutrophil activation. Released in response to an inflammatory stimulus, exerts its effect by binding to the G-protein-coupled receptors CXCR1 and CXCR2, primarily found in neutrophils, monocytes and endothelial cells. G-protein heterotrimer (alpha, beta, gamma subunits) constitutively binds to CXCR1/CXCR2 receptor and activation by IL8 leads to beta and gamma subunits release from Galpha (GNAI2 in neutrophils) and activation of several downstream signaling pathways including PI3K and MAPK pathways. This is Interleukin-8 (CXCL8) from Tursiops truncatus (Atlantic bottle-nosed dolphin).